A 223-amino-acid polypeptide reads, in one-letter code: Cytidylate kinase (223 aa).

17-25 is a binding site for ATP; it reads GPTASGKGT.

The protein belongs to the cytidylate kinase family. Type 1 subfamily.

Its subcellular location is the cytoplasm. It carries out the reaction CMP + ATP = CDP + ADP. The enzyme catalyses dCMP + ATP = dCDP + ADP. This Bordetella bronchiseptica (strain ATCC BAA-588 / NCTC 13252 / RB50) (Alcaligenes bronchisepticus) protein is Cytidylate kinase.